The sequence spans 131 residues: Small ribosomal subunit protein uS8 (131 aa).

The protein belongs to the universal ribosomal protein uS8 family. Part of the 30S ribosomal subunit. Contacts proteins S5 and S12.

In terms of biological role, one of the primary rRNA binding proteins, it binds directly to 16S rRNA central domain where it helps coordinate assembly of the platform of the 30S subunit. This is Small ribosomal subunit protein uS8 from Cupriavidus necator (strain ATCC 17699 / DSM 428 / KCTC 22496 / NCIMB 10442 / H16 / Stanier 337) (Ralstonia eutropha).